A 197-amino-acid chain; its full sequence is Holliday junction branch migration complex subunit RuvA (197 aa).

Residues 1–63 (MIALLNGQLI…EDALLLFGFL (63 aa)) form a domain I region. Residues 64–142 (TETEKDLFGL…PVQAVPGNAP (79 aa)) are domain II. A flexible linker region spans residues 142-146 (PLPAE). Residues 147–197 (TAGDLREDALSALVNLGYKENLSRKALDGIDTAPDAPLEDILKQALKLLMR) are domain III.

It belongs to the RuvA family. Homotetramer. Forms an RuvA(8)-RuvB(12)-Holliday junction (HJ) complex. HJ DNA is sandwiched between 2 RuvA tetramers; dsDNA enters through RuvA and exits via RuvB. An RuvB hexamer assembles on each DNA strand where it exits the tetramer. Each RuvB hexamer is contacted by two RuvA subunits (via domain III) on 2 adjacent RuvB subunits; this complex drives branch migration. In the full resolvosome a probable DNA-RuvA(4)-RuvB(12)-RuvC(2) complex forms which resolves the HJ.

It localises to the cytoplasm. Its function is as follows. The RuvA-RuvB-RuvC complex processes Holliday junction (HJ) DNA during genetic recombination and DNA repair, while the RuvA-RuvB complex plays an important role in the rescue of blocked DNA replication forks via replication fork reversal (RFR). RuvA specifically binds to HJ cruciform DNA, conferring on it an open structure. The RuvB hexamer acts as an ATP-dependent pump, pulling dsDNA into and through the RuvAB complex. HJ branch migration allows RuvC to scan DNA until it finds its consensus sequence, where it cleaves and resolves the cruciform DNA. The chain is Holliday junction branch migration complex subunit RuvA from Syntrophotalea carbinolica (strain DSM 2380 / NBRC 103641 / GraBd1) (Pelobacter carbinolicus).